A 148-amino-acid polypeptide reads, in one-letter code: Large ribosomal subunit protein uL13 (148 aa).

This sequence belongs to the universal ribosomal protein uL13 family. Part of the 50S ribosomal subunit.

Functionally, this protein is one of the early assembly proteins of the 50S ribosomal subunit, although it is not seen to bind rRNA by itself. It is important during the early stages of 50S assembly. This is Large ribosomal subunit protein uL13 from Sulfolobus acidocaldarius (strain ATCC 33909 / DSM 639 / JCM 8929 / NBRC 15157 / NCIMB 11770).